The chain runs to 204 residues: Somatotropin (204 aa).

An N-terminal signal peptide occupies residues 1–17; the sequence is MDRVVLMLSVLSLGVSS. The residue at position 18 (glutamine 18) is a Pyrrolidone carboxylic acid. Histidine 36 provides a ligand contact to Zn(2+). Residues cysteine 69 and cysteine 177 are joined by a disulfide bond. Glutamate 186 contributes to the Zn(2+) binding site. A disulfide bridge links cysteine 194 with cysteine 202.

The protein belongs to the somatotropin/prolactin family.

It is found in the secreted. Its function is as follows. Growth hormone plays an important role in growth control and is involved in the regulation of several anabolic processes. Implicated as an osmoregulatory substance important for seawater adaptation. This Acanthopagrus latus (Yellowfin seabream) protein is Somatotropin (gh).